Here is a 181-residue protein sequence, read N- to C-terminus: 6,7-dimethyl-8-ribityllumazine synthase 2 (181 aa).

The disordered stretch occupies residues 1–23; it reads MSLPMTETVTDPAETAPPTAERS. 5-amino-6-(D-ribitylamino)uracil contacts are provided by residues W40, 74 to 76, 98 to 100, and S129; these read SFE and LVV.

Belongs to the DMRL synthase family.

The catalysed reaction is (2S)-2-hydroxy-3-oxobutyl phosphate + 5-amino-6-(D-ribitylamino)uracil = 6,7-dimethyl-8-(1-D-ribityl)lumazine + phosphate + 2 H2O + H(+). Its pathway is cofactor biosynthesis; riboflavin biosynthesis; riboflavin from 2-hydroxy-3-oxobutyl phosphate and 5-amino-6-(D-ribitylamino)uracil: step 1/2. In terms of biological role, catalyzes the formation of 6,7-dimethyl-8-ribityllumazine by condensation of 5-amino-6-(D-ribitylamino)uracil with 3,4-dihydroxy-2-butanone 4-phosphate. This is the penultimate step in the biosynthesis of riboflavin. The chain is 6,7-dimethyl-8-ribityllumazine synthase 2 from Rhodopseudomonas palustris (strain ATCC BAA-98 / CGA009).